The sequence spans 341 residues: MRVLGLETSCDETGVALYDSERGLLADALFSQIDLHRVYGGVVPELASRDHVKRMLPLIRQVLDESGCTPADIDAIAYTAGPGLVGALLVGASCAQAMAFAWGVPAVGVHHMEGHLLAPMLEEQPPRFPFVALLVSGGHTQLVRVDGIGRYQLLGESVDDAAGEAFDKTAKLIGLGYPGGPEIARLAELGTPGRFVFPRPMTDRPGLDFSFSGLKTFTLNTWQRCVEAGDDSEQTRCDIALAFQTAVVETLLIKCRRALKQTGLKNLVIAGGVSANQALRSGLEKMLGEMKGQVFYARPRFCTDNGAMIAYAGCQRLLAGQHDGPAISVQPRWPMESLPAV.

Residues histidine 111 and histidine 115 each contribute to the Fe cation site. Residues 134–138 (LVSGG), aspartate 167, glycine 180, and asparagine 276 each bind substrate. Aspartate 304 is a Fe cation binding site.

Belongs to the KAE1 / TsaD family. It depends on Fe(2+) as a cofactor.

It localises to the cytoplasm. It carries out the reaction L-threonylcarbamoyladenylate + adenosine(37) in tRNA = N(6)-L-threonylcarbamoyladenosine(37) in tRNA + AMP + H(+). Required for the formation of a threonylcarbamoyl group on adenosine at position 37 (t(6)A37) in tRNAs that read codons beginning with adenine. Is involved in the transfer of the threonylcarbamoyl moiety of threonylcarbamoyl-AMP (TC-AMP) to the N6 group of A37, together with TsaE and TsaB. TsaD likely plays a direct catalytic role in this reaction. This Pseudomonas aeruginosa (strain LESB58) protein is tRNA N6-adenosine threonylcarbamoyltransferase.